Consider the following 312-residue polypeptide: MAAQKINEGLEHLAKAEKYLKTGFLKWKPDYDSAASEYGKAAVAFKNAKQFEQAKDACLREAVAHENNRALFHAAKAYEQAGMMLKEMQKLPEAVQLIEKASMMYLENGTPDTAAMALERAGKLIENVDPEKAVQLYQQTANVFENEERLRQAVELLGKASRLLVRGRRFDEAALSIQKEKNIYKEIENYPTCYKKTIAQVLVHLHRNDYVAAERCVRESYSIPGFNGSEDCAALEQLLEGYDQQDQDQVSEVCNSPLFKYMDNDYAKLGLSLVVPGGGIKKKSPATPQAKPDGAAGMAAEEEEDEYSGGLC.

The interval 281–312 (KKKSPATPQAKPDGAAGMAAEEEEDEYSGGLC) is disordered. Ser-284 bears the Phosphoserine mark. Thr-287 bears the Phosphothreonine mark. The segment covering 300-312 (AEEEEDEYSGGLC) has biased composition (acidic residues). At Ser-308 the chain carries Phosphoserine.

This sequence belongs to the SNAP family. In terms of assembly, interacts with RAB11FIP5. Interacts with VTI1A. As to expression, abundantly expressed in the heart, liver and kidneys with lower expression in the brain, spleen, lung, muscle and testes.

It is found in the membrane. The protein resides in the golgi apparatus. Its function is as follows. Required for vesicular transport between the endoplasmic reticulum and the Golgi apparatus. This is Gamma-soluble NSF attachment protein from Mus musculus (Mouse).